Here is a 115-residue protein sequence, read N- to C-terminus: UPF0212 protein MJ0068 (115 aa).

Belongs to the UPF0212 family.

This chain is UPF0212 protein MJ0068, found in Methanocaldococcus jannaschii (strain ATCC 43067 / DSM 2661 / JAL-1 / JCM 10045 / NBRC 100440) (Methanococcus jannaschii).